The following is a 460-amino-acid chain: Receptor-like cytosolic serine/threonine-protein kinase RBK2 (460 aa).

The interval 1–67 is disordered; sequence MNSASAHDLR…DADTDVQCKN (67 aa). The span at 7–23 shows a compositional bias: basic and acidic residues; the sequence is HDLRLLEVDKEKQDPKS. The Protein kinase domain occupies 143–415; it reads FSPENIIGRG…VELLLGHEDV (273 aa). ATP is bound by residues 149 to 157 and Lys171; that span reads IGRGGYADV. Asp267 acts as the Proton acceptor in catalysis. Position 307 is a phosphothreonine (Thr307). Tyr315 is subject to Phosphotyrosine.

The protein belongs to the protein kinase superfamily. Ser/Thr protein kinase family. Interacts with ARAC5 and ARAC10.

It localises to the cytoplasm. The enzyme catalyses L-seryl-[protein] + ATP = O-phospho-L-seryl-[protein] + ADP + H(+). It catalyses the reaction L-threonyl-[protein] + ATP = O-phospho-L-threonyl-[protein] + ADP + H(+). The sequence is that of Receptor-like cytosolic serine/threonine-protein kinase RBK2 (RBK2) from Arabidopsis thaliana (Mouse-ear cress).